The following is a 121-amino-acid chain: Small ribosomal subunit protein bS6 (121 aa).

A disordered region spans residues 99–121; the sequence is PLPAPRVAPGTEAPAEPEAAAPA. Positions 110–121 are enriched in low complexity; the sequence is EAPAEPEAAAPA.

This sequence belongs to the bacterial ribosomal protein bS6 family.

Its function is as follows. Binds together with bS18 to 16S ribosomal RNA. The chain is Small ribosomal subunit protein bS6 from Synechococcus sp. (strain CC9311).